The primary structure comprises 415 residues: Serine hydroxymethyltransferase 2 (415 aa).

(6S)-5,6,7,8-tetrahydrofolate-binding positions include L121 and 125 to 127; that span reads GHL. K229 bears the N6-(pyridoxal phosphate)lysine mark.

Belongs to the SHMT family. Homodimer. Requires pyridoxal 5'-phosphate as cofactor.

The protein localises to the cytoplasm. It catalyses the reaction (6R)-5,10-methylene-5,6,7,8-tetrahydrofolate + glycine + H2O = (6S)-5,6,7,8-tetrahydrofolate + L-serine. It participates in one-carbon metabolism; tetrahydrofolate interconversion. The protein operates within amino-acid biosynthesis; glycine biosynthesis; glycine from L-serine: step 1/1. In terms of biological role, catalyzes the reversible interconversion of serine and glycine with tetrahydrofolate (THF) serving as the one-carbon carrier. This reaction serves as the major source of one-carbon groups required for the biosynthesis of purines, thymidylate, methionine, and other important biomolecules. Also exhibits THF-independent aldolase activity toward beta-hydroxyamino acids, producing glycine and aldehydes, via a retro-aldol mechanism. This is Serine hydroxymethyltransferase 2 from Bordetella parapertussis (strain 12822 / ATCC BAA-587 / NCTC 13253).